The chain runs to 353 residues: Polyadenylate-binding protein-interacting protein 10 (353 aa).

The tract at residues 1 to 61 is disordered; sequence MAVAENAGVK…IDSTPETDDR (61 aa). The segment covering 20 to 31 has biased composition (low complexity); it reads NNNTAASATETT. The PAM2-like motif lies at 96–106; the sequence is KLNPMAQEFVP. Residues 128-159 form a disordered region; the sequence is AAPPKLADGNDHFPRRRRSFGQGKRRMNKRTS. The segment covering 141–156 has biased composition (basic residues); it reads PRRRRSFGQGKRRMNK. The Bipartite nuclear localization signal motif lies at 142–153; the sequence is RRRRSFGQGKRR. RRM domains follow at residues 169–244 and 266–341; these read RTVY…PSKT.

In terms of tissue distribution, expressed in cauline leaves, stems, rosette leaves, immature siliques and primary inflorescences.

The protein localises to the nucleus. The protein is Polyadenylate-binding protein-interacting protein 10 (CID10) of Arabidopsis thaliana (Mouse-ear cress).